Consider the following 221-residue polypeptide: Ribosomal RNA small subunit methyltransferase G (221 aa).

S-adenosyl-L-methionine contacts are provided by residues G90, L95, 141–142, and R154; that span reads VE.

This sequence belongs to the methyltransferase superfamily. RNA methyltransferase RsmG family.

The protein localises to the cytoplasm. It catalyses the reaction guanosine(527) in 16S rRNA + S-adenosyl-L-methionine = N(7)-methylguanosine(527) in 16S rRNA + S-adenosyl-L-homocysteine. Functionally, specifically methylates the N7 position of guanine in position 527 of 16S rRNA. The polypeptide is Ribosomal RNA small subunit methyltransferase G (Polaromonas naphthalenivorans (strain CJ2)).